Here is a 2703-residue protein sequence, read N- to C-terminus: Serine/arginine repetitive matrix protein 2 (2703 aa).

Methionine 1 carries the N-acetylmethionine modification. Residues 60 to 92 (HERKRRVELRCLELEEMMEEQGYEEQQIQEKVA) adopt a coiled-coil conformation. At lysine 101 the chain carries N6-acetyllysine. Glycyl lysine isopeptide (Lys-Gly) (interchain with G-Cter in SUMO2) cross-links involve residues lysine 108 and lysine 130. Residues 141 to 1007 (ISDSYVDGSS…SGSFHLCPGV (867 aa)) are disordered. A Phosphotyrosine modification is found at tyrosine 145. Lysine 169 carries the N6-acetyllysine modification. Composition is skewed to basic residues over residues 186-197 (KQKKKKKKKDRG) and 207-249 (RERK…KRSR). Positions 197–259 (GRRSESSSPR…STTPAPKSRR (63 aa)) are sufficient for RNA-binding. Residues serine 220 and serine 222 each carry the phosphoserine modification. Low complexity predominate over residues 263–284 (STSADSASSSDTSRSRSRSAAA). Phosphoserine is present on residues serine 295, serine 300, serine 310, serine 322, and serine 323. Over residues 319–334 (QQPSSPAPSTKQSSSP) the composition is skewed to low complexity. Basic and acidic residues predominate over residues 335 to 345 (YEDKDKKEKSA). A phosphoserine mark is found at serine 349, serine 351, serine 355, and serine 356. Threonine 357 and threonine 365 each carry phosphothreonine. 20 positions are modified to phosphoserine: serine 375, serine 385, serine 393, serine 396, serine 402, serine 406, serine 422, serine 433, serine 434, serine 435, serine 438, serine 452, serine 482, serine 484, serine 503, serine 505, serine 507, serine 531, serine 533, and serine 540. The segment covering 383-396 (PSSQEPVNPSSEAS) has biased composition (polar residues). Residues 425-437 (PTKGSRHASSSPE) show a composition bias toward polar residues. A compositionally biased stretch (basic residues) spans 459–533 (NRSHGRAKRD…SPQRRGRSRS (75 aa)). Over residues 534-543 (PQRPGWSRSR) the composition is skewed to low complexity. Composition is skewed to basic residues over residues 544 to 561 (NTQR…RSHS), 568 to 721 (GRSR…RRGR), and 730 to 740 (NKSRTSQRRSR). Serine 700, serine 702, and serine 704 each carry phosphoserine. Phosphoserine is present on residues serine 773, serine 775, and serine 778. A compositionally biased stretch (low complexity) spans 785–817 (SQTPTRRSRSGSSPPKQKSKTPPRQSRSNSPQP). Residues serine 821 and serine 829 each carry the phosphoserine modification. Composition is skewed to polar residues over residues 829 to 851 (SVTN…SESS) and 859 to 874 (RTPS…PRVK). Residues threonine 831 and threonine 841 each carry the phosphothreonine modification. Phosphoserine is present on residues serine 846, serine 850, and serine 851. Low complexity-rich tracts occupy residues 875–891 (SSTP…SPQP) and 898–919 (SPRG…TSRT). Phosphoserine is present on residues serine 882, serine 909, serine 924, serine 926, serine 928, serine 940, serine 942, serine 944, serine 945, serine 946, and serine 949. Residue threonine 955 is modified to Phosphothreonine. A compositionally biased stretch (polar residues) spans 960 to 1000 (SGSTSPYLKSMLQTPPDQNLSGSKSPCPQKSRDSPTGSSGS). Phosphoserine is present on residues serine 962 and serine 964. At tyrosine 966 the chain carries Phosphotyrosine. Threonine 973 bears the Phosphothreonine mark. Phosphoserine occurs at positions 980, 984, and 993. The residue at position 995 (threonine 995) is a Phosphothreonine. Phosphoserine occurs at positions 997, 1000, 1011, 1037, and 1038. Residues 1024-1057 (VQQKGHTQTWPDTSSPEVMQTQVESPLLQSKSQT) show a composition bias toward polar residues. Positions 1024 to 1112 (VQQKGHTQTW…TKPDSSIYPL (89 aa)) are disordered. Threonine 1044 is modified (phosphothreonine). Phosphoserine is present on residues serine 1048, serine 1064, serine 1066, serine 1067, and serine 1068. The span at 1058 to 1068 (SPKGSLSRSSS) shows a compositional bias: low complexity. Position 1071 is a phosphothreonine (threonine 1071). 27 positions are modified to phosphoserine: serine 1077, serine 1087, serine 1094, serine 1097, serine 1117, serine 1151, serine 1159, serine 1175, serine 1188, serine 1216, serine 1225, serine 1229, serine 1230, serine 1269, serine 1276, serine 1278, serine 1284, serine 1287, serine 1294, serine 1305, serine 1325, serine 1338, serine 1339, serine 1340, serine 1343, serine 1359, and serine 1360. A compositionally biased stretch (basic and acidic residues) spans 1079–1092 (VKQDKSEISTDPKL). A disordered region spans residues 1136–2092 (IQEDVASSCI…RSPGMLEPLG (957 aa)). Positions 1146-1158 (PRDKFSPTQDRPE) are enriched in basic and acidic residues. Residues 1270 to 1284 (PEHKELSHSPPRENS) show a composition bias toward basic and acidic residues. Polar residues predominate over residues 1285–1304 (FESSLEFKNSGPVSEVNTGF). Threonine 1370 carries the post-translational modification Phosphothreonine. The segment covering 1371–1387 (PSRERSSSASPELKDGL) has biased composition (basic and acidic residues). A phosphoserine mark is found at serine 1372, serine 1378, and serine 1380. A Phosphothreonine modification is found at threonine 1390. The span at 1397-1408 (SGSSPGLRDGSG) shows a compositional bias: low complexity. A phosphoserine mark is found at serine 1400 and serine 1407. The residue at position 1409 (threonine 1409) is a Phosphothreonine. A compositionally biased stretch (polar residues) spans 1409 to 1431 (TPSRHSLSGSSPGMKDTPQTPSR). A phosphoserine mark is found at serine 1414, serine 1416, serine 1418, and serine 1419. Residue threonine 1428 is modified to Phosphothreonine. Phosphoserine is present on residues serine 1438 and serine 1439. The residue at position 1448 (threonine 1448) is a Phosphothreonine. Phosphoserine is present on residues serine 1453, serine 1455, serine 1457, serine 1458, and serine 1465. The span at 1454 to 1468 (HSPSSPERNNKSVTP) shows a compositional bias: polar residues. Threonine 1467 bears the Phosphothreonine mark. Residues serine 1473, serine 1475, serine 1477, and serine 1478 each carry the phosphoserine modification. The segment covering 1475–1489 (SESSVEQKNLARTSP) has biased composition (polar residues). Threonine 1487 carries the phosphothreonine modification. A compositionally biased stretch (low complexity) spans 1490–1499 (GQRSRSGSSQ). Residues serine 1493, serine 1495, serine 1497, serine 1498, and serine 1508 each carry the phosphoserine modification. Positions 1511–1523 (ERSESDSSPDSKP) are enriched in basic and acidic residues. Basic residues predominate over residues 1524–1533 (KTRTPLRQRS). A phosphoserine mark is found at serine 1533, serine 1535, serine 1537, serine 1538, serine 1554, serine 1556, serine 1557, serine 1572, serine 1576, serine 1577, serine 1604, serine 1614, serine 1647, serine 1649, and serine 1650. A compositionally biased stretch (low complexity) spans 1604 to 1613 (SPEGSSSSES). The segment covering 1637–1647 (KSHTPPRRRSS) has biased composition (basic residues). Position 1654 is a phosphothreonine (threonine 1654). Phosphoserine is present on residues serine 1683, serine 1685, serine 1687, serine 1688, serine 1718, and serine 1720. Composition is skewed to basic residues over residues 1725 to 1745 (GLQR…RRRD) and 1754 to 1772 (SRRR…RRRG). 6 positions are modified to phosphoserine: serine 1774, serine 1778, serine 1810, serine 1813, serine 1832, and serine 1834. Positions 1776–1789 (YHSRSPTRQESSRT) are enriched in low complexity. Positions 1790–1810 (SSRRRRGRSRTPLTSRKRSRS) are enriched in basic residues. The span at 1818-2020 (KRSRSRASPA…PRAARGKRSL (203 aa)) shows a compositional bias: basic residues. Threonine 1836 carries the phosphothreonine modification. 2 positions are modified to phosphoserine: serine 1840 and serine 1846. A Phosphothreonine modification is found at threonine 1848. A phosphoserine mark is found at serine 1849, serine 1869, serine 1872, serine 1876, and serine 1878. Threonine 1880 and threonine 1884 each carry phosphothreonine. A phosphoserine mark is found at serine 1898 and serine 1900. Residues threonine 1902 and threonine 1906 each carry the phosphothreonine modification. Residues serine 1910 and serine 1912 each carry the phosphoserine modification. 2 positions are modified to phosphothreonine: threonine 1914 and threonine 1918. Phosphoserine is present on residues serine 1922, serine 1924, and serine 1927. Threonine 1930 is modified (phosphothreonine). Serine 1936, serine 1939, serine 1948, serine 1951, serine 1960, serine 1963, serine 1970, and serine 1972 each carry phosphoserine. The residue at position 1974 (threonine 1974) is a Phosphothreonine. Phosphoserine occurs at positions 1982 and 1984. A Phosphothreonine modification is found at threonine 1986. Phosphoserine is present on residues serine 1994, serine 1996, serine 1998, and serine 2019. A Phosphothreonine modification is found at threonine 2021. Positions 2022-2047 (RSPPAIRRRSASGSSSDRSRSATPPA) are enriched in low complexity. Serine 2023 and serine 2042 each carry phosphoserine. Threonine 2044 carries the phosphothreonine modification. Residues serine 2052 and serine 2054 each carry the phosphoserine modification. Phosphothreonine is present on threonine 2056. Residues 2062–2076 (SSSRMSCFSRPSMSP) show a composition bias toward low complexity. Phosphoserine occurs at positions 2070, 2073, 2075, and 2084. Residue threonine 2096 is modified to Phosphothreonine. Residues arginine 2146, arginine 2159, arginine 2183, and arginine 2198 each carry the omega-N-methylarginine modification. Serine 2224 carries the phosphoserine modification. 2 positions are modified to omega-N-methylarginine: arginine 2226 and arginine 2240. Threonine 2241 and threonine 2254 each carry phosphothreonine. Phosphoserine is present on serine 2262. The disordered stretch occupies residues 2263–2703 (LTGSGTPPTA…SNRHRSSRSP (441 aa)). Phosphothreonine occurs at positions 2268 and 2281. A compositionally biased stretch (polar residues) spans 2269–2283 (PPTAANYPSSSRTPQ). Position 2295 is an omega-N-methylarginine (arginine 2295). Phosphoserine occurs at positions 2296, 2321, and 2329. Threonine 2334 is subject to Phosphothreonine. Position 2335 is a phosphoserine (serine 2335). Position 2337 is an asymmetric dimethylarginine; alternate (arginine 2337). Arginine 2337 is modified (omega-N-methylarginine; alternate). Serine 2347, serine 2351, and serine 2360 each carry phosphoserine. The residue at position 2362 (threonine 2362) is a Phosphothreonine. A phosphoserine mark is found at serine 2365, serine 2368, serine 2381, serine 2384, serine 2404, and serine 2408. 2 stretches are compositionally biased toward polar residues: residues 2410 to 2443 (FSDQ…SASD) and 2467 to 2476 (TGAQQPSTLA). The span at 2487-2521 (SSSSSSSSSSSSSSSSSSSSSSSSGSSSSDSEGSS) shows a compositional bias: low complexity. Serine 2535 carries the phosphoserine modification. The residue at position 2537 (threonine 2537) is a Phosphothreonine. A Glycyl lysine isopeptide (Lys-Gly) (interchain with G-Cter in SUMO2) cross-link involves residue lysine 2541. Threonine 2553 is subject to Phosphothreonine. The segment covering 2562–2602 (SSSSSSSSSSSSSSSSSSSSSSSSSSSSSSSSSSSSSSSSS) has biased composition (low complexity). Over residues 2605 to 2622 (PAKPGPQALPKPASPKKP) the composition is skewed to pro residues. 10 positions are modified to phosphoserine: serine 2618, serine 2629, serine 2631, serine 2638, serine 2642, serine 2644, serine 2646, serine 2648, serine 2656, and serine 2660. A compositionally biased stretch (basic and acidic residues) spans 2623 to 2643 (PPGERRSRSPRKPIDSLRDSR). Phosphothreonine is present on threonine 2689. Phosphoserine is present on serine 2691. Basic residues predominate over residues 2694–2703 (SNRHRSSRSP).

This sequence belongs to the CWC21 family. In terms of assembly, component of pre-catalytic, catalytic and post-catalytic spliceosome complexes. Found in a pre-mRNA splicing complex with SFRS4, SFRS5, SNRP70, SNRPA1, SRRM1 and SRRM2. Component of the minor spliceosome, which splices U12-type introns. Interacts with DHX8. Interacts with CACTIN.

The protein resides in the nucleus. It is found in the nucleus speckle. Functionally, required for pre-mRNA splicing as component of the spliceosome. As a component of the minor spliceosome, involved in the splicing of U12-type introns in pre-mRNAs. The chain is Serine/arginine repetitive matrix protein 2 (Srrm2) from Mus musculus (Mouse).